Here is a 493-residue protein sequence, read N- to C-terminus: Aminotransferase swnA (493 aa).

The protein belongs to the class-I pyridoxal-phosphate-dependent aminotransferase family. The cofactor is pyridoxal 5'-phosphate.

The protein operates within mycotoxin biosynthesis. In terms of biological role, aminotransferase; part of the gene cluster that mediates the biosynthesis of swainsonine (SW), a cytotoxic fungal alkaloid and a potential cancer therapy drug. Swainsonine production occurs via a multibranched pathway and is dispensable for fungal colonization of plants and infection of insect hosts. The first step of swainsonine biosynthesis is the production of the precursor pipecolic acid (PA) via conversion of L-lysine (Lys) to 1-piperideine-6-carboxylate (P6C) by the aminotransferase swnA, the latter being further reduced to PA by the reductase swnR. The PKS-NRPS hybrid synthetase swnK uptakes and condensates PA and malonyl-CoA with and without skipping of the ketoreductase (KR) domain in order to produce 3 intermediates, 1-oxoindolizidine, (1S)-1-hydroxyindolizin, and (1R)-1-hydroxyindolizine; with the transisomer (1S)-1-hydroxyindolizin being predominant. The terminal thioester reductase (TE) domain of swnK is involved in reduction of the thioester bond to release the intermediate aldehydes. The oxidoreductase swnN could contribute to the reduction of 1-oxoindolizidine to (1S)-1-hydroxyindolizin and (1R)-1-hydroxyindolizine, contributing to the major route of SW production. The dioxygenase swnH2 would be responsible for the oxidization of (1R)-1-hydroxyindolizine into (1R,2S)-1,2-dihydroxyindolizine and of (1S)-1-hydroxyindolizin to yield both (1R,2S)-1,2-dihydroxyindolizine and (1S,2S)-1,2-dihydroxyindolizine. The dioxygenase swnH1 then performs the conversion of the 1,2-dihydroxyindolizine epimers to SW. The protein is Aminotransferase swnA of Arthroderma benhamiae (strain ATCC MYA-4681 / CBS 112371) (Trichophyton mentagrophytes).